The sequence spans 483 residues: Isocitrate dehydrogenase [NADP] (483 aa).

Residue Thr74 coordinates NADP(+). 5 residues coordinate D-threo-isocitrate: Ser83, Asn85, Arg89, Arg99, and Arg121. Mg(2+) is bound at residue Asp232. Residues 264–270 (HGSAPDI) and Asn277 each bind NADP(+).

It belongs to the isocitrate and isopropylmalate dehydrogenases family. Homodimer. It depends on Mg(2+) as a cofactor. Requires Mn(2+) as cofactor.

The enzyme catalyses D-threo-isocitrate + NADP(+) = 2-oxoglutarate + CO2 + NADPH. Functionally, catalyzes the oxidative decarboxylation of isocitrate to 2-oxoglutarate and carbon dioxide with the concomitant reduction of NADP(+). This Rickettsia felis (strain ATCC VR-1525 / URRWXCal2) (Rickettsia azadi) protein is Isocitrate dehydrogenase [NADP] (icd).